Here is a 564-residue protein sequence, read N- to C-terminus: MDEKQLVSQALSAAIDGVLGVEQIAAIIEKPKSSDLGDLAFPAFQLAKTLRKSPQIIAGEIAEKIDTKGFEKVIAVGPYVNFFLDKNATASEVIREVLTEGEHYGDANIGEGGNVPIDMSAPNIAKPFSIGHLRSTVIGDSIAKIYEKLGYQPIKINHLGDWGKQFGLLITAYKKYGDEATITANPIDELLKLYVKINAEAKEDPEVDEEGRQWFLKMEQGDEEALRIWKWFSDVSLIEFNRIYGKLGVTFDHFMGESFYSDKMDAIVEDLENKNLLHESKGALIVDLEKYNLNPALIKKTDGATLYITRDLATAAYRKKTFNFVKSLYVVGGEQTNHFKQLKAVLKEAGYDWSDDMVHVPFGMVTQGGKKFSTRKGHVVKLEMALDEAVDRAEKQIEAKNPNLENKEEVAKQVGVGAVKFYDLKTDRNNGYDFDLDEMVSFEGETGPYVQYAHARIQSILRKANRKVNIDNISLVVSDAEAWEIVKALKEFPNIVKRAADNYEPSIIAKYAISLAQAFNKYYAHVRILEDDAQLDGRLALISATSIVLKEALRLLGVAAPENM.

The short motif at 122–132 (PNIAKPFSIGH) is the 'HIGH' region element.

It belongs to the class-I aminoacyl-tRNA synthetase family. In terms of assembly, monomer.

The protein localises to the cytoplasm. It catalyses the reaction tRNA(Arg) + L-arginine + ATP = L-arginyl-tRNA(Arg) + AMP + diphosphate. The polypeptide is Arginine--tRNA ligase (Lactococcus lactis subsp. cremoris (strain SK11)).